Reading from the N-terminus, the 437-residue chain is MGDSNSSQEAYSDTTSTNASRIADQNQLNLNVDLEKNQTVRKSGSLEALQNAKIHVPKHSDGSPLDYPKLNTYTFVPTTVPPYVLEAQFDKLRLQDKGTVDGNVTDDKNLPKEFKWGQFASTIGCHSAYTRDQNYNPSHKSYDGYSLSSSTSSKNAALREILGDMCSEWGGEERLEGVLHSEIGANLEFNTTEERKEWLQYIEKVKDFYYGDNKKNPESPESVHNKVYKSDWVNELNKEREKWRRLKQRKLQQWRPPLTSLLLDNQYLILGLRIFTGILSCISLALAIKIFQNSRSNNTISESKIGQQPSTIMAICVNAVAIAYIIYIAHDEFAGKPVGLRNPLSKLKLILLDLLFIIFSSANLALAFNTRFDKEWVCTSIRRSNGSTYGYPKIPRICRKQEALSAFLFVALFMWVITFSISIVRVVEKVSSITNRN.

Residues 1–24 are disordered; that stretch reads MGDSNSSQEAYSDTTSTNASRIAD. Residues 1–267 lie on the Cytoplasmic side of the membrane; the sequence is MGDSNSSQEA…LTSLLLDNQY (267 aa). Residues Ser-45 and Ser-167 each carry the phosphoserine modification. A helical transmembrane segment spans residues 268-288; it reads LILGLRIFTGILSCISLALAI. Residues 289–308 lie on the Extracellular side of the membrane; sequence KIFQNSRSNNTISESKIGQQ. Asn-297 carries N-linked (GlcNAc...) asparagine glycosylation. A helical transmembrane segment spans residues 309–329; it reads PSTIMAICVNAVAIAYIIYIA. The Cytoplasmic portion of the chain corresponds to 330 to 348; sequence HDEFAGKPVGLRNPLSKLK. Residues 349–369 traverse the membrane as a helical segment; that stretch reads LILLDLLFIIFSSANLALAFN. Topologically, residues 370–403 are extracellular; the sequence is TRFDKEWVCTSIRRSNGSTYGYPKIPRICRKQEA. N-linked (GlcNAc...) asparagine glycosylation occurs at Asn-385. The helical transmembrane segment at 404 to 424 threads the bilayer; the sequence is LSAFLFVALFMWVITFSISIV. Residues 425–437 lie on the Cytoplasmic side of the membrane; sequence RVVEKVSSITNRN.

As to quaternary structure, interacts with SPO14.

Its subcellular location is the membrane. Regulator of phospholipase D (SPO14) which is required for SPO14 catalytic activity in mitotic cells. Essential to buffer the toxic effects of C16:0 platelet activating factor. This Saccharomyces cerevisiae (strain ATCC 204508 / S288c) (Baker's yeast) protein is Regulator of phospholipase D SRF1 (SRF1).